Here is a 150-residue protein sequence, read N- to C-terminus: MVKKRVVTAGTFDILHPGHYEVLKFAKSLGDELIVIVARDETVKKIKGRKPIIPEEQRREMVEALKPVDKAILGSLKNKLEPILELKPDVIVLGPDQTTFDEETLKEELAKYGLHPEIVRFKGYKKCPFHSSFDIVKEIIRRFCNKEIKI.

ATP is bound by residues 11–12 (TF), 16–19 (HPGH), D96, and Y124.

Belongs to the archaeal FAD synthase family. Homodimer. It depends on a divalent metal cation as a cofactor.

The catalysed reaction is FMN + ATP + H(+) = FAD + diphosphate. The protein operates within cofactor biosynthesis; FAD biosynthesis; FAD from FMN: step 1/1. Catalyzes the transfer of the AMP portion of ATP to flavin mononucleotide (FMN) to produce flavin adenine dinucleotide (FAD) coenzyme. In Methanocaldococcus fervens (strain DSM 4213 / JCM 15782 / AG86) (Methanococcus fervens), this protein is FAD synthase.